The chain runs to 323 residues: Thiamine-monophosphate kinase (323 aa).

Mg(2+) contacts are provided by Asp30, Ser45, Thr46, and Asp47. Residue His54 coordinates substrate. The Mg(2+) site is built by Asp75 and Asp122. Residues 121-122 and Arg146 contribute to the ATP site; that span reads GD. Residue Asp212 participates in Mg(2+) binding. Ser214 is an ATP binding site. Residue Asp215 coordinates Mg(2+). Residues Glu263 and Phe319 each contribute to the substrate site.

The protein belongs to the thiamine-monophosphate kinase family.

The catalysed reaction is thiamine phosphate + ATP = thiamine diphosphate + ADP. It functions in the pathway cofactor biosynthesis; thiamine diphosphate biosynthesis; thiamine diphosphate from thiamine phosphate: step 1/1. Functionally, catalyzes the ATP-dependent phosphorylation of thiamine-monophosphate (TMP) to form thiamine-pyrophosphate (TPP), the active form of vitamin B1. The chain is Thiamine-monophosphate kinase from Buchnera aphidicola subsp. Schizaphis graminum (strain Sg).